The chain runs to 78 residues: Large ribosomal subunit protein bL28 (78 aa).

The protein belongs to the bacterial ribosomal protein bL28 family.

The protein is Large ribosomal subunit protein bL28 of Prochlorococcus marinus (strain MIT 9211).